We begin with the raw amino-acid sequence, 449 residues long: Kynurenine 3-monooxygenase (449 aa).

Belongs to the aromatic-ring hydroxylase family. KMO subfamily. It depends on FAD as a cofactor.

It catalyses the reaction L-kynurenine + NADPH + O2 + H(+) = 3-hydroxy-L-kynurenine + NADP(+) + H2O. The protein operates within cofactor biosynthesis; NAD(+) biosynthesis; quinolinate from L-kynurenine: step 1/3. In terms of biological role, catalyzes the hydroxylation of L-kynurenine (L-Kyn) to form 3-hydroxy-L-kynurenine (L-3OHKyn). Required for synthesis of quinolinic acid. This is Kynurenine 3-monooxygenase from Cytophaga hutchinsonii (strain ATCC 33406 / DSM 1761 / CIP 103989 / NBRC 15051 / NCIMB 9469 / D465).